The primary structure comprises 1119 residues: G8 domain-containing protein DDB_G0288475 (1119 aa).

Positions 1–22 (MKYSSFLLLFIYIFFILNNINA) are cleaved as a signal peptide. The 129-residue stretch at 276–404 (TIWTSGVVPL…YHNTWTKLAA (129 aa)) folds into the G8 domain. N-linked (GlcNAc...) asparagine glycans are attached at residues N308, N559, N736, N854, N968, N1035, N1056, and N1070.

Belongs to the comF family.

It is found in the secreted. The polypeptide is G8 domain-containing protein DDB_G0288475 (Dictyostelium discoideum (Social amoeba)).